Consider the following 255-residue polypeptide: Imidazole glycerol phosphate synthase subunit HisF (255 aa).

Residues Asp11 and Asp130 contribute to the active site.

It belongs to the HisA/HisF family. In terms of assembly, heterodimer of HisH and HisF.

It localises to the cytoplasm. It carries out the reaction 5-[(5-phospho-1-deoxy-D-ribulos-1-ylimino)methylamino]-1-(5-phospho-beta-D-ribosyl)imidazole-4-carboxamide + L-glutamine = D-erythro-1-(imidazol-4-yl)glycerol 3-phosphate + 5-amino-1-(5-phospho-beta-D-ribosyl)imidazole-4-carboxamide + L-glutamate + H(+). The protein operates within amino-acid biosynthesis; L-histidine biosynthesis; L-histidine from 5-phospho-alpha-D-ribose 1-diphosphate: step 5/9. Functionally, IGPS catalyzes the conversion of PRFAR and glutamine to IGP, AICAR and glutamate. The HisF subunit catalyzes the cyclization activity that produces IGP and AICAR from PRFAR using the ammonia provided by the HisH subunit. This chain is Imidazole glycerol phosphate synthase subunit HisF, found in Campylobacter jejuni subsp. jejuni serotype O:6 (strain 81116 / NCTC 11828).